Reading from the N-terminus, the 258-residue chain is Arylamine N-acetyltransferase 1 (258 aa).

C59 (acyl-thioester intermediate) is an active-site residue. A substrate-binding site is contributed by 97–98 (IH). Catalysis depends on residues H98 and D113. CoA is bound by residues Y199 and T205.

The protein belongs to the arylamine N-acetyltransferase family.

Its subcellular location is the cytoplasm. It carries out the reaction an arylamine + acetyl-CoA = an N-acetylarylamine + CoA. Its function is as follows. Participates in the detoxification of a plethora of hydrazine and arylamine drugs. In Felis catus (Cat), this protein is Arylamine N-acetyltransferase 1 (NAT1).